The following is a 529-amino-acid chain: AT hook-containing protein attf-4 (529 aa).

Disordered regions lie at residues 1–39, 131–158, 173–200, and 233–255; these read MLQPPTLTPNANGEEFRGSVSTDRSSASPSNIDEIMEDD, QVVHKDQQNGSSFLPSANKTSENPKPIE, GGGGGKIHTERLSEPARKQSRKVGFPPP, and VSANTSTASPGPSSEGSGDDHLE. 2 stretches are compositionally biased toward polar residues: residues 19-31 and 138-153; these read SVSTDRSSASPSN and QNGSSFLPSANKTSEN. Residues 179–189 show a composition bias toward basic and acidic residues; that stretch reads IHTERLSEPAR. A compositionally biased stretch (low complexity) spans 233–248; the sequence is VSANTSTASPGPSSEG. Residues 307 to 319 constitute a DNA-binding region (a.T hook); that stretch reads GRGRGRPKLIGDE. Positions 436-476 are disordered; sequence LEGGSPPASSSSTATTSTATKTVKQESKNGHQNEENLNVKQ. The span at 443-455 shows a compositional bias: low complexity; that stretch reads ASSSSTATTSTAT. Residues 458-469 show a composition bias toward basic and acidic residues; that stretch reads VKQESKNGHQNE.

The chain is AT hook-containing protein attf-4 from Caenorhabditis elegans.